The chain runs to 597 residues: Elongation factor 4 (597 aa).

The tr-type G domain occupies 2 to 184 (DHIRNFSIIA…ALIAKVPPPK (183 aa)). Residues 14-19 (DHGKST) and 131-134 (NKID) each bind GTP.

This sequence belongs to the TRAFAC class translation factor GTPase superfamily. Classic translation factor GTPase family. LepA subfamily.

It localises to the cell inner membrane. The catalysed reaction is GTP + H2O = GDP + phosphate + H(+). In terms of biological role, required for accurate and efficient protein synthesis under certain stress conditions. May act as a fidelity factor of the translation reaction, by catalyzing a one-codon backward translocation of tRNAs on improperly translocated ribosomes. Back-translocation proceeds from a post-translocation (POST) complex to a pre-translocation (PRE) complex, thus giving elongation factor G a second chance to translocate the tRNAs correctly. Binds to ribosomes in a GTP-dependent manner. The protein is Elongation factor 4 of Paraburkholderia phymatum (strain DSM 17167 / CIP 108236 / LMG 21445 / STM815) (Burkholderia phymatum).